The following is a 428-amino-acid chain: Spliceosome RNA helicase DDX39B (428 aa).

Residues 1-19 are compositionally biased toward acidic residues; it reads MAENDVDNELLDYEDDEVE. The segment at 1-31 is disordered; sequence MAENDVDNELLDYEDDEVETAAGGDGAEAPA. Alanine 2 carries the N-acetylalanine modification. Lysine 36 is subject to N6-acetyllysine; alternate. Lysine 36 participates in a covalent cross-link: Glycyl lysine isopeptide (Lys-Gly) (interchain with G-Cter in SUMO2); alternate. Phosphoserine occurs at positions 38 and 41. The Q motif signature appears at 45–73; the sequence is SGFRDFLLKPELLRAIVDCGFEHPSEVQH. Residues 76–249 enclose the Helicase ATP-binding domain; that stretch reads IPQAILGMDV…RKFMQDPMEI (174 aa). Position 89-96 (89-96) interacts with ATP; it reads AKSGMGKT. The residue at position 172 (threonine 172) is a Phosphothreonine. Residues 196–199 carry the DECD box motif; it reads DECD. The 162-residue stretch at 261-422 folds into the Helicase C-terminal domain; it reads GLQQYYVKLK…ELPDEIDISS (162 aa).

Belongs to the DEAD box helicase family. DECD subfamily. Homodimer, and heterodimer with DDX39A. DDX39B interacts with the THO subcomplex to form the THO-DDX39B complex which multimerizes into a 28-subunit tetrameric assembly. Component of the transcription/export (TREX) complex at least composed of ALYREF/THOC4, DDX39B, SARNP/CIP29, CHTOP and the THO subcomplex; in the complex interacts with THOC2. THOC1-THOC2-THOC3-DDX39B subcomplex is sufficient for the interaction with export factor NXF1-NXT1. TREX seems to have a dynamic structure involving ATP-dependent remodeling. Within the TREX complex bridges ALYREF/THOC4 and the THO subcomplex, and, in a ATP-dependent manner, ALYREF/THOC4 and SARNP/CIP29. Component of the spliceosome. Interacts directly with U2AF2. Interacts with RBM8A, RNPS1 and SRRM1, FYTTD1/UIF, THOC1, MX1 and POLDIP3. Interacts with LUZP4. Interacts with SARNP/CIP29 (via the C-terminal domain); the interaction is direct and facilitates RNA binding of DDX39B.

The protein resides in the nucleus. It is found in the nucleus speckle. It localises to the cytoplasm. The catalysed reaction is ATP + H2O = ADP + phosphate + H(+). In terms of biological role, involved in nuclear export of spliced and unspliced mRNA. Component of the TREX complex which is thought to couple mRNA transcription, processing and nuclear export, and specifically associates with spliced mRNA and not with unspliced pre-mRNA. The TREX complex is recruited to spliced mRNAs by a transcription-independent mechanism, binds to mRNA upstream of the exon-junction complex (EJC) and is recruited in a splicing- and cap-dependent manner to a region near the 5' end of the mRNA where it functions in mRNA export to the cytoplasm via the TAP/NXF1 pathway. The THOC1-THOC2-THOC3 core complex alone is sufficient to promote ATPase activity of DDX39B; in the complex THOC2 is the only component that directly interacts with DDX39B. Associates with SARNP/CIP29, which facilitates RNA binding of DDX39B and likely plays a role in mRNA export. May undergo several rounds of ATP hydrolysis during assembly of TREX to drive subsequent loading of components such as ALYREF/THOC4 and CHTOP onto mRNA. Also associates with pre-mRNA independent of ALYREF/THOC4. Involved in the nuclear export of intronless mRNA; the ATP-bound form is proposed to recruit export adapter ALYREF/THOC4 to intronless mRNA; its ATPase activity is cooperatively stimulated by RNA and ALYREF/THOC4 and ATP hydrolysis is thought to trigger the dissociation from RNA to allow the association of ALYREF/THOC4 and the NXF1-NXT1 heterodimer. Involved in transcription elongation and genome stability. Its function is as follows. Splice factor that is required for the first ATP-dependent step in spliceosome assembly and for the interaction of U2 snRNP with the branchpoint. Has both RNA-stimulated ATP binding/hydrolysis activity and ATP-dependent RNA unwinding activity. Even with the stimulation of RNA, the ATPase activity is weak. Can only hydrolyze ATP but not other NTPs. The RNA stimulation of ATPase activity does not have a strong preference for the sequence and length of the RNA. However, ssRNA stimulates the ATPase activity much more strongly than dsRNA. Can unwind 5' or 3' overhangs or blunt end RNA duplexes in vitro. The ATPase and helicase activities are not influenced by U2AF2; the effect of ALYREF/THOC4 is reported conflictingly. The protein is Spliceosome RNA helicase DDX39B (DDX39B) of Bos taurus (Bovine).